A 274-amino-acid chain; its full sequence is Diaminopimelate epimerase (274 aa).

Substrate contacts are provided by asparagine 11, glutamine 44, and asparagine 64. The Proton donor role is filled by cysteine 73. Residues 74–75 (GN), asparagine 157, asparagine 190, and 208–209 (ER) contribute to the substrate site. Catalysis depends on cysteine 217, which acts as the Proton acceptor. 218-219 (GS) is a substrate binding site.

It belongs to the diaminopimelate epimerase family. In terms of assembly, homodimer.

It localises to the cytoplasm. The enzyme catalyses (2S,6S)-2,6-diaminopimelate = meso-2,6-diaminopimelate. Its pathway is amino-acid biosynthesis; L-lysine biosynthesis via DAP pathway; DL-2,6-diaminopimelate from LL-2,6-diaminopimelate: step 1/1. Its function is as follows. Catalyzes the stereoinversion of LL-2,6-diaminopimelate (L,L-DAP) to meso-diaminopimelate (meso-DAP), a precursor of L-lysine and an essential component of the bacterial peptidoglycan. This is Diaminopimelate epimerase from Enterobacter sp. (strain 638).